We begin with the raw amino-acid sequence, 91 residues long: Cell division topological specificity factor (91 aa).

The protein belongs to the MinE family.

In terms of biological role, prevents the cell division inhibition by proteins MinC and MinD at internal division sites while permitting inhibition at polar sites. This ensures cell division at the proper site by restricting the formation of a division septum at the midpoint of the long axis of the cell. In Chloroflexus aggregans (strain MD-66 / DSM 9485), this protein is Cell division topological specificity factor.